Here is a 440-residue protein sequence, read N- to C-terminus: Glutamate-1-semialdehyde 2,1-aminomutase (440 aa).

Lys273 is modified (N6-(pyridoxal phosphate)lysine).

Belongs to the class-III pyridoxal-phosphate-dependent aminotransferase family. HemL subfamily. Homodimer. Pyridoxal 5'-phosphate is required as a cofactor.

The protein localises to the cytoplasm. It catalyses the reaction (S)-4-amino-5-oxopentanoate = 5-aminolevulinate. It functions in the pathway porphyrin-containing compound metabolism; protoporphyrin-IX biosynthesis; 5-aminolevulinate from L-glutamyl-tRNA(Glu): step 2/2. This chain is Glutamate-1-semialdehyde 2,1-aminomutase, found in Alkaliphilus metalliredigens (strain QYMF).